The chain runs to 1309 residues: Angiotensin-converting enzyme (1309 aa).

The signal sequence occupies residues 1-33 (MGAASGCRWPWPPLLPLLLMLLLPPPPLPVALA). Topologically, residues 34–1259 (LDSALQPGNF…GLNLEEQQAR (1226 aa)) are extracellular. 7 N-linked (GlcNAc...) asparagine glycosylation sites follow: asparagine 42, asparagine 58, asparagine 78, asparagine 115, asparagine 135, asparagine 150, and asparagine 164. Peptidase M2 domains follow at residues 44-627 (TADE…LGWP) and 646-1225 (VSDE…LGWP). Cysteine 161 and cysteine 169 form a disulfide bridge. Tyrosine 235 is a binding site for chloride. The N-linked (GlcNAc...) asparagine glycan is linked to asparagine 322. The cysteines at positions 363 and 381 are disulfide-linked. Histidine 394 is a Zn(2+) binding site. The active-site Proton acceptor 1 is the glutamate 395. Zn(2+) contacts are provided by histidine 398 and glutamate 422. Asparagine 512 is a glycosylation site (N-linked (GlcNAc...) asparagine). Histidine 523 serves as the catalytic Proton donor 1. Residue asparagine 526 is glycosylated (N-linked (GlcNAc...) asparagine). Arginine 532 lines the chloride pocket. Cysteine 548 and cysteine 560 are joined by a disulfide. 4 N-linked (GlcNAc...) asparagine glycosylation sites follow: asparagine 680, asparagine 698, asparagine 717, and asparagine 763. The cysteines at positions 760 and 766 are disulfide-linked. Residues arginine 794 and tyrosine 832 each coordinate chloride. Asparagine 945 is a glycosylation site (N-linked (GlcNAc...) asparagine). Cysteine 960 and cysteine 978 are oxidised to a cystine. Histidine 991 contacts Zn(2+). Glutamate 992 functions as the Proton acceptor 2 in the catalytic mechanism. 2 residues coordinate Zn(2+): histidine 995 and glutamate 1019. Chloride contacts are provided by tryptophan 1093 and arginine 1097. Histidine 1121 (proton donor 2) is an active-site residue. Residue arginine 1130 coordinates chloride. An intrachain disulfide couples cysteine 1146 to cysteine 1158. Residues asparagine 1194 and asparagine 1228 are each glycosylated (N-linked (GlcNAc...) asparagine). The tract at residues 1218 to 1259 (HGEKLGWPQYNWTPNSARLEGSFAGTGRVNFLGLNLEEQQAR) is juxtamembrane stalk. The helical transmembrane segment at 1260–1280 (VGQWVLLFLGVTLLVATMGLT) threads the bilayer. Over 1281–1309 (QRLFSIRHQILRRTHRGPQFGSEVELRHS) the chain is Cytoplasmic. At serine 1302 the chain carries Phosphoserine.

It belongs to the peptidase M2 family. Monomer and homodimer; homodimerizes following binding to an inhibitor. Interacts with calmodulin (CALM1, CALM2 or CALM3); interaction takes place in the cytoplasmic region and regulates phosphorylation and proteolytic cleavage. Requires Zn(2+) as cofactor. It depends on chloride as a cofactor. Post-translationally, produced following proteolytic cleavage by secretase enzymes that cleave the transmembrane form in the juxtamembrane stalk region upstream of the transmembrane region. Cleavage can take place at different sites of the juxtamembrane stalk region. Phosphorylated by CK2 on Ser-1302; which allows membrane retention. Phosphorylated on tyrosine residues on its extracellular part, promoting cleavage by secretase enzymes and formation of the soluble form (Angiotensin-converting enzyme, soluble form).

It is found in the cell membrane. It localises to the cytoplasm. The protein localises to the secreted. The enzyme catalyses Release of a C-terminal dipeptide, oligopeptide-|-Xaa-Yaa, when Xaa is not Pro, and Yaa is neither Asp nor Glu. Thus, conversion of angiotensin I to angiotensin II, with increase in vasoconstrictor activity, but no action on angiotensin II.. It catalyses the reaction angiotensin I + H2O = L-histidyl-L-leucine + angiotensin II. It carries out the reaction bradykinin + H2O = L-Phe-L-Arg + bradykinin(1-7). The catalysed reaction is substance P + H2O = substance P(1-9) + L-Leu-L-Met-NH2. The enzyme catalyses substance P + H2O = substance P(1-8) + Gly-L-Leu-L-Met-NH2. It catalyses the reaction substance P + H2O = L-Phe-L-Phe-Gly-L-Leu-L-Met-NH2 + substance P(1-6). It carries out the reaction neurotensin + H2O = neurotensin(1-11) + L-isoleucyl-L-leucine. The catalysed reaction is goralatide + H2O = N-acetyl-L-seryl-L-aspartate + L-lysyl-L-proline. The enzyme catalyses Met-enkephalin + H2O = L-phenylalanyl-L-methionine + L-tyrosylglycylglycine. It catalyses the reaction Leu-enkephalin + H2O = L-tyrosylglycylglycine + L-phenylalanyl-L-leucine. It carries out the reaction Met-enkephalin-Arg-Phe + H2O = L-arginyl-L-phenylalanine + Met-enkephalin. With respect to regulation, the dipeptidyl carboxypeptidase activity is strongly activated by chloride. The dipeptidyl carboxypeptidase activity is specifically inhibited by lisinopril, captopril and enalaprilat. Dipeptidyl carboxypeptidase that removes dipeptides from the C-terminus of a variety of circulating hormones, such as angiotensin I, bradykinin or enkephalins, thereby playing a key role in the regulation of blood pressure, electrolyte homeostasis or synaptic plasticity. Composed of two similar catalytic domains, each possessing a functional active site, with different selectivity for substrates. Plays a major role in the angiotensin-renin system that regulates blood pressure and sodium retention by the kidney by converting angiotensin I to angiotensin II, resulting in an increase of the vasoconstrictor activity of angiotensin. Also able to inactivate bradykinin, a potent vasodilator, and therefore enhance the blood pressure response. Acts as a regulator of synaptic transmission by mediating cleavage of neuropeptide hormones, such as substance P, neurotensin or enkephalins. Catalyzes degradation of different enkephalin neuropeptides (Met-enkephalin, Leu-enkephalin, Met-enkephalin-Arg-Phe and possibly Met-enkephalin-Arg-Gly-Leu). Acts as a regulator of synaptic plasticity in the nucleus accumbens of the brain by mediating cleavage of Met-enkephalin-Arg-Phe, a strong ligand of Mu-type opioid receptor OPRM1, into Met-enkephalin. Met-enkephalin-Arg-Phe cleavage by ACE decreases activation of OPRM1, leading to long-term synaptic potentiation of glutamate release. Also acts as a regulator of hematopoietic stem cell differentiation by mediating degradation of hemoregulatory peptide N-acetyl-SDKP (AcSDKP). Acts as a regulator of cannabinoid signaling pathway by mediating degradation of hemopressin, an antagonist peptide of the cannabinoid receptor CNR1. Involved in amyloid-beta metabolism by catalyzing degradation of Amyloid-beta protein 40 and Amyloid-beta protein 42 peptides, thereby preventing plaque formation. Catalyzes cleavage of cholecystokinin (maturation of Cholecystokinin-8 and Cholecystokinin-5) and Gonadoliberin-1 (both maturation and degradation) hormones. Degradation of hemoregulatory peptide N-acetyl-SDKP (AcSDKP) and amyloid-beta proteins is mediated by the N-terminal catalytic domain, while angiotensin I and cholecystokinin cleavage is mediated by the C-terminal catalytic region. Functionally, soluble form that is released in blood plasma and other body fluids following proteolytic cleavage in the juxtamembrane stalk region. The chain is Angiotensin-converting enzyme from Sus scrofa (Pig).